The chain runs to 855 residues: MGPTNILAAFIAVSSLFIQSLALNPYAKSNLAVYWGQGAGQNRLSYFCEKTSFDIIVVGFINVFPDQGPAGWPGSNFGNQCADSYYYTKNGTKTKLLDGCYQIKEDLPKCKALGKTILLSLGGGAVHDFYEVKSEESALNFADFLWGAFGPLTPDWTGPRPFGEASVDGFDFDIEKGSNFGYSIMVRRLRELFLQDPLNRYYISAAPQCIMPDKYLSHAISNSAFDFIFIQFYNNPSCSAKRWVTNPKSVTYTVDDWVKYIRKSGNPLAKLFIGLPASKSAAAKEDYLTPGEATKIVSTYMAKYPSTFGGMMVWEATASENNKLGGLPYADIMKEVLLRCDPDPPTSTVTSTTSASTSTQTSSQSTTMETKTLSASTTPSSPSTVSPSSTMQTTSTGSTSIETVTTRSQEPPSTTISTRSASTEPVTTRSQEPPSTTISTRSASTETVTTRSQEPPSTTISTWSASTETSTSSQDSPSTTISTKSAPTGTVTTRSQDLPSTTISTRSPETETETATTKSQGSPSITLSTRSSSAETVSTRSQHSSSTTISTKSAPTETGTTSEHSTSMPVSTRSASTETVITRSQNSDSQSMTVSTRSPSTESITTRSQGSPSETFSTKSVPVDTISTELPSQTPTTIITGTPSDPVSAPTTTVPPNPTLTLAPSSSTTEDRTTITTIITTSYVTVCPTGFTTVTITYTTTYCPETASLTPTQPPIPGAPAPPPDGWTTIVTVCPQCAPTPTTVTLTVPTRSAFLPARTETRPVVTVVPVPENPIKNVKPSESGDFVTVTTAAPATVTKTLEYNNPVDSDVNVQPTGGSSPVEFEGSAMTVRSMDVVAKALITAGAAVLGLFLGL.

An N-terminal signal peptide occupies residues 1–22; sequence MGPTNILAAFIAVSSLFIQSLA. A GH18 domain is found at 29 to 340; that stretch reads SNLAVYWGQG…DIMKEVLLRC (312 aa). Residue Asn-90 is glycosylated (N-linked (GlcNAc...) asparagine). Glu-175 functions as the Proton donor in the catalytic mechanism. The segment at 341–672 is disordered; sequence DPDPPTSTVT…APSSSTTEDR (332 aa). A compositionally biased stretch (low complexity) spans 346-400; sequence TSTVTSTTSASTSTQTSSQSTTMETKTLSASTTPSSPSTVSPSSTMQTTSTGSTS. Residues 401–456 are compositionally biased toward polar residues; that stretch reads IETVTTRSQEPPSTTISTRSASTEPVTTRSQEPPSTTISTRSASTETVTTRSQEPP. The segment covering 457–483 has biased composition (low complexity); that stretch reads STTISTWSASTETSTSSQDSPSTTIST. Residues 484-521 are compositionally biased toward polar residues; sequence KSAPTGTVTTRSQDLPSTTISTRSPETETETATTKSQG. Residues 522–533 show a composition bias toward low complexity; the sequence is SPSITLSTRSSS. A compositionally biased stretch (polar residues) spans 534–555; the sequence is AETVSTRSQHSSSTTISTKSAP. Residues 556–567 are compositionally biased toward low complexity; that stretch reads TETGTTSEHSTS. Over residues 568–641 the composition is skewed to polar residues; it reads MPVSTRSAST…SQTPTTIITG (74 aa). Composition is skewed to low complexity over residues 642 to 652 and 659 to 672; these read TPSDPVSAPTT and TLTL…TEDR. Gly-826 carries the GPI-anchor amidated glycine lipid modification. A propeptide spans 827 to 855 (removed in mature form); sequence SAMTVRSMDVVAKALITAGAAVLGLFLGL.

Belongs to the glycosyl hydrolase 18 family. Chitinase class III subfamily.

Its subcellular location is the cell membrane. The enzyme catalyses Random endo-hydrolysis of N-acetyl-beta-D-glucosaminide (1-&gt;4)-beta-linkages in chitin and chitodextrins.. Functionally, may be associated with endosporulation. The protein is Endochitinase 2 (CTS2) of Coccidioides posadasii (strain C735) (Valley fever fungus).